The sequence spans 448 residues: Phosphoglucosamine mutase (448 aa).

Ser100 serves as the catalytic Phosphoserine intermediate. Positions 100, 240, 242, and 244 each coordinate Mg(2+). Ser100 bears the Phosphoserine mark.

The protein belongs to the phosphohexose mutase family. The cofactor is Mg(2+). Activated by phosphorylation.

The catalysed reaction is alpha-D-glucosamine 1-phosphate = D-glucosamine 6-phosphate. In terms of biological role, catalyzes the conversion of glucosamine-6-phosphate to glucosamine-1-phosphate. In Bacillus anthracis (strain A0248), this protein is Phosphoglucosamine mutase.